The chain runs to 119 residues: Vitelline membrane protein Vm34Ca (119 aa).

Residues Met-1–Ala-19 form the signal peptide. Residues Ser-69–Ser-106 form the VM domain.

Belongs to the vitelline membrane protein family. In terms of tissue distribution, follicle cells.

Its subcellular location is the secreted. Its function is as follows. Major early eggshell protein. The protein is Vitelline membrane protein Vm34Ca (Vm34Ca) of Drosophila melanogaster (Fruit fly).